Reading from the N-terminus, the 385-residue chain is 4-hydroxy-3-methylbut-2-en-1-yl diphosphate synthase (flavodoxin) 2 (385 aa).

Positions 281, 284, 316, and 323 each coordinate [4Fe-4S] cluster.

The protein belongs to the IspG family. [4Fe-4S] cluster is required as a cofactor.

It catalyses the reaction (2E)-4-hydroxy-3-methylbut-2-enyl diphosphate + oxidized [flavodoxin] + H2O + 2 H(+) = 2-C-methyl-D-erythritol 2,4-cyclic diphosphate + reduced [flavodoxin]. Its pathway is isoprenoid biosynthesis; isopentenyl diphosphate biosynthesis via DXP pathway; isopentenyl diphosphate from 1-deoxy-D-xylulose 5-phosphate: step 5/6. Converts 2C-methyl-D-erythritol 2,4-cyclodiphosphate (ME-2,4cPP) into 1-hydroxy-2-methyl-2-(E)-butenyl 4-diphosphate. In Streptomyces avermitilis (strain ATCC 31267 / DSM 46492 / JCM 5070 / NBRC 14893 / NCIMB 12804 / NRRL 8165 / MA-4680), this protein is 4-hydroxy-3-methylbut-2-en-1-yl diphosphate synthase (flavodoxin) 2.